A 29-amino-acid polypeptide reads, in one-letter code: Cytochrome b6-f complex subunit 8 (29 aa).

The chain crosses the membrane as a helical span at residues 3–23 (TVSLAWAALMVVFTFSLSLVV).

Belongs to the PetN family. As to quaternary structure, the 4 large subunits of the cytochrome b6-f complex are cytochrome b6, subunit IV (17 kDa polypeptide, PetD), cytochrome f and the Rieske protein, while the 4 small subunits are PetG, PetL, PetM and PetN. The complex functions as a dimer.

The protein resides in the plastid. It localises to the chloroplast thylakoid membrane. Its function is as follows. Component of the cytochrome b6-f complex, which mediates electron transfer between photosystem II (PSII) and photosystem I (PSI), cyclic electron flow around PSI, and state transitions. This chain is Cytochrome b6-f complex subunit 8, found in Chloranthus spicatus (Chulantree).